The chain runs to 662 residues: Hypoxia-inducible factor 3-alpha (662 aa).

Residues Met-1–Arg-25 form a disordered region. The bHLH domain maps to Leu-12 to His-65. A nuclear localization signal region spans residues Gln-75 to Leu-98. 2 PAS domains span residues Gly-80 to Ser-150 and Pro-225 to Gly-295. The nuclear export signal stretch occupies residues Ala-228–Ala-272. A disordered region spans residues Glu-352 to Pro-379. An LRRLL motif is present at residues Leu-410–Leu-413. Disordered regions lie at residues Ile-417 to Pro-445 and Ser-459 to Pro-480. Residues Pro-421 to Ala-433 are compositionally biased toward low complexity. The ODD stretch occupies residues Leu-448–Glu-581. The tract at residues Val-450 to Glu-501 is NTAD. A Glycyl lysine isopeptide (Lys-Gly) (interchain with G-Cter in ubiquitin) cross-link involves residue Lys-463. The segment covering Thr-469–Pro-480 has biased composition (acidic residues). The short motif at Leu-485–Asp-492 is the LAPYISMD element. 4-hydroxyproline is present on Pro-487. The segment at Ser-500 to Ser-595 is disordered. A compositionally biased stretch (basic residues) spans Lys-505–Ser-521. A Glycyl lysine isopeptide (Lys-Gly) (interchain with G-Cter in ubiquitin) cross-link involves residue Lys-565. The segment covering Ser-572–Pro-584 has biased composition (basic and acidic residues).

As to quaternary structure, interacts with ARNT, BAD, BCL2L2, EPAS1, HIF1A, MCL1 and VHL. In terms of processing, in normoxia, hydroxylated on Pro-487 in the oxygen-dependent degradation domain (ODD) by PHD. The hydroxylated proline promotes interaction with VHL, initiating rapid ubiquitination and subsequent proteasomal degradation. Ubiquitinated; ubiquitination occurs in a VHL- and oxygen-dependent pathway and subsequently targeted for proteasomal degradation. Expressed in the perivenous zone of the liver. Expressed in all tissues examined during normoxia. Expressed in brain and lung. Expressed in periportal and perivenous hepatocytes and in endothelial cells of the central vein (at protein level). Highest expression seen in the cerebral cortex, hippocampus, and lung. Low expression in myocardial tissue and liver.

It is found in the nucleus. The protein resides in the cytoplasm. The protein localises to the nucleus speckle. Its subcellular location is the mitochondrion. In terms of biological role, acts as a transcriptional regulator in adaptive response to low oxygen tension. Attenuates the ability of transcription factor HIF1A, EPAS1 and the HIF1A-ARNT complex to bind to hypoxia-responsive elements (HRE) located within the enhancer/promoter of hypoxia-inducible target genes and hence inhibits HRE-driven transcriptional activation. Functions as an inhibitor of angiogenesis in hypoxic cells of the cornea. Plays a role in the development of the cardiorespiratory system. May also be involved in apoptosis. May act as a tumor suppressor. This is Hypoxia-inducible factor 3-alpha from Rattus norvegicus (Rat).